A 489-amino-acid polypeptide reads, in one-letter code: Rhamnulokinase (489 aa).

Residue 13-17 coordinates ATP; that stretch reads ASSGR. C68 and C222 form a disulfide bridge. Substrate contacts are provided by residues G83 and 236–238; that span reads HDT. D237 acts as the Proton acceptor in catalysis. T259 lines the ATP pocket. Residue N296 coordinates substrate. Residue Q304 coordinates ATP. C353 and C370 are joined by a disulfide. ATP is bound at residue G402. The cysteines at positions 413 and 417 are disulfide-linked.

The protein belongs to the rhamnulokinase family. Requires Mg(2+) as cofactor.

It catalyses the reaction L-rhamnulose + ATP = L-rhamnulose 1-phosphate + ADP + H(+). The protein operates within carbohydrate degradation; L-rhamnose degradation; glycerone phosphate from L-rhamnose: step 2/3. Its function is as follows. Involved in the catabolism of L-rhamnose (6-deoxy-L-mannose). Catalyzes the transfer of the gamma-phosphate group from ATP to the 1-hydroxyl group of L-rhamnulose to yield L-rhamnulose 1-phosphate. This is Rhamnulokinase from Salmonella agona (strain SL483).